Reading from the N-terminus, the 132-residue chain is D-beta-hydroxybutyrate dehydrogenase, mitochondrial (132 aa).

3 to 27 is a binding site for NAD(+); the sequence is LVTGCDSGFGFSLAKHLHSKGFLVF. The residue at position 17 (K17) is an N6-acetyllysine. S59 serves as a coordination point for substrate. Y66 functions as the Proton acceptor in the catalytic mechanism. Residue K70 is modified to N6-acetyllysine. S77 carries O-linked (GlcNAc) serine glycosylation. S104 bears the Phosphoserine mark.

It belongs to the short-chain dehydrogenases/reductases (SDR) family. In terms of assembly, homotetramer.

It localises to the mitochondrion inner membrane. Its subcellular location is the mitochondrion matrix. It catalyses the reaction (R)-3-hydroxybutanoate + NAD(+) = acetoacetate + NADH + H(+). Its activity is regulated as follows. Requires phosphatidylcholine as an allosteric activator for enzymatic activity. This is D-beta-hydroxybutyrate dehydrogenase, mitochondrial from Mesocricetus auratus (Golden hamster).